The sequence spans 582 residues: DNA polymerase IV (582 aa).

The segment at 127–161 (NADDGQSSTDKESEISTDVESERNDDSNNKDMIQA) is disordered. Basic and acidic residues predominate over residues 135-155 (TDKESEISTDVESERNDDSNN). Residues 360–369 (RGYSKCGDID) are involved in ssDNA binding. Mg(2+)-binding residues include Asp-367, Asp-369, and Asp-502.

The protein belongs to the DNA polymerase type-X family. Interacts with DNL4 subunit of the DNL4-LIF1 complex. The cofactor is Mg(2+).

Its subcellular location is the nucleus. The catalysed reaction is DNA(n) + a 2'-deoxyribonucleoside 5'-triphosphate = DNA(n+1) + diphosphate. Its activity is regulated as follows. Stimulated by the interaction with the DNL4-LIF1 complex. Functionally, repair polymerase. Involved in gap-filling in DNA nonhomologous end joining (NHEJ) required for double-strand break repair. Seems to conduct DNA synthesis in a stepwise distributive fashion rather than in a processive fashion as for other DNA polymerases. Preferentially acts upon short gaps formed by the alignment of linear duplexes with complementary single-strand ends. Required for filling gaps that need removal of a 5'- or 3'-terminal mismatch, however lacks nuclease activities. The protein is DNA polymerase IV (POL4) of Saccharomyces cerevisiae (strain ATCC 204508 / S288c) (Baker's yeast).